We begin with the raw amino-acid sequence, 567 residues long: Proline--tRNA ligase (567 aa).

It belongs to the class-II aminoacyl-tRNA synthetase family. ProS type 1 subfamily. Homodimer.

It localises to the cytoplasm. The catalysed reaction is tRNA(Pro) + L-proline + ATP = L-prolyl-tRNA(Pro) + AMP + diphosphate. Its function is as follows. Catalyzes the attachment of proline to tRNA(Pro) in a two-step reaction: proline is first activated by ATP to form Pro-AMP and then transferred to the acceptor end of tRNA(Pro). As ProRS can inadvertently accommodate and process non-cognate amino acids such as alanine and cysteine, to avoid such errors it has two additional distinct editing activities against alanine. One activity is designated as 'pretransfer' editing and involves the tRNA(Pro)-independent hydrolysis of activated Ala-AMP. The other activity is designated 'posttransfer' editing and involves deacylation of mischarged Ala-tRNA(Pro). The misacylated Cys-tRNA(Pro) is not edited by ProRS. This chain is Proline--tRNA ligase, found in Campylobacter fetus subsp. fetus (strain 82-40).